Reading from the N-terminus, the 149-residue chain is Macrodomain Ter protein (149 aa).

The protein belongs to the MatP family. As to quaternary structure, homodimer.

It is found in the cytoplasm. Functionally, required for spatial organization of the terminus region of the chromosome (Ter macrodomain) during the cell cycle. Prevents early segregation of duplicated Ter macrodomains during cell division. Binds specifically to matS, which is a 13 bp signature motif repeated within the Ter macrodomain. The sequence is that of Macrodomain Ter protein from Vibrio campbellii (strain ATCC BAA-1116).